A 370-amino-acid chain; its full sequence is Anhydro-N-acetylmuramic acid kinase (370 aa).

Position 13-20 (13-20 (GTSMDGVD)) interacts with ATP.

The protein belongs to the anhydro-N-acetylmuramic acid kinase family.

The enzyme catalyses 1,6-anhydro-N-acetyl-beta-muramate + ATP + H2O = N-acetyl-D-muramate 6-phosphate + ADP + H(+). It participates in amino-sugar metabolism; 1,6-anhydro-N-acetylmuramate degradation. The protein operates within cell wall biogenesis; peptidoglycan recycling. Catalyzes the specific phosphorylation of 1,6-anhydro-N-acetylmuramic acid (anhMurNAc) with the simultaneous cleavage of the 1,6-anhydro ring, generating MurNAc-6-P. Is required for the utilization of anhMurNAc either imported from the medium or derived from its own cell wall murein, and thus plays a role in cell wall recycling. This chain is Anhydro-N-acetylmuramic acid kinase, found in Vibrio vulnificus (strain YJ016).